The sequence spans 234 residues: Bromodomain-containing protein DDB_G0271118 (234 aa).

Positions 1–60 (MDLGTIKGELDNNGYSTIKDFTADVRLMFENALTYNADSSPIWKHAKTLLYFHRKHDEHV) constitute a Bromo domain. The segment covering 134-194 (NNNSNNNNNN…SSSSSSSSSS (61 aa)) has biased composition (low complexity). Residues 134 to 209 (NNNSNNNNNN…KKYSDEERRN (76 aa)) form a disordered region.

This is Bromodomain-containing protein DDB_G0271118 from Dictyostelium discoideum (Social amoeba).